The primary structure comprises 167 residues: N-alpha-acetyltransferase (167 aa).

The region spanning 12–167 is the N-acetyltransferase domain; it reads YRIRNARLTD…EDAYLMAAPL (156 aa). Tyrosine 37 lines the substrate pocket. Histidine 88 provides a ligand contact to Zn(2+). Residues 92–94 and 100–105 each bind acetyl-CoA; these read IAV and RLGIGT. Glutamate 127 lines the Zn(2+) pocket. Acetyl-CoA-binding positions include asparagine 132 and 139-141; that span reads YKK. Residue tyrosine 154 coordinates substrate.

It belongs to the acetyltransferase family. ARD1 subfamily. As to quaternary structure, homodimer.

The protein localises to the cytoplasm. The catalysed reaction is N-terminal L-alanyl-[protein] + acetyl-CoA = N-terminal N(alpha)-acetyl-L-alanyl-[protein] + CoA + H(+). It carries out the reaction N-terminal L-seryl-[protein] + acetyl-CoA = N-terminal N(alpha)-acetyl-L-seryl-[protein] + CoA + H(+). The enzyme catalyses N-terminal L-methionyl-L-leucyl-[protein] + acetyl-CoA = N-terminal N(alpha)-acetyl-L-methionyl-L-leucyl-[protein] + CoA + H(+). It catalyses the reaction N-terminal L-methionyl-L-glutamyl-[protein] + acetyl-CoA = N-terminal N(alpha)-acetyl-L-methionyl-L-glutamyl-[protein] + CoA + H(+). Functionally, displays alpha (N-terminal) acetyltransferase activity. Catalyzes the covalent attachment of an acetyl moiety from acetyl-CoA to the free alpha-amino group at the N-terminus of a protein. This chain is N-alpha-acetyltransferase, found in Sulfurisphaera tokodaii (strain DSM 16993 / JCM 10545 / NBRC 100140 / 7) (Sulfolobus tokodaii).